We begin with the raw amino-acid sequence, 367 residues long: DNA replication and repair protein RecF (367 aa).

30–37 (GANGSGKT) contacts ATP.

It belongs to the RecF family.

It is found in the cytoplasm. The RecF protein is involved in DNA metabolism; it is required for DNA replication and normal SOS inducibility. RecF binds preferentially to single-stranded, linear DNA. It also seems to bind ATP. The sequence is that of DNA replication and repair protein RecF from Pseudomonas fluorescens (strain ATCC BAA-477 / NRRL B-23932 / Pf-5).